The following is an 880-amino-acid chain: Alanine--tRNA ligase (880 aa).

Residues His-568, His-572, Cys-670, and His-674 each contribute to the Zn(2+) site.

Belongs to the class-II aminoacyl-tRNA synthetase family. Zn(2+) serves as cofactor.

The protein localises to the cytoplasm. The catalysed reaction is tRNA(Ala) + L-alanine + ATP = L-alanyl-tRNA(Ala) + AMP + diphosphate. In terms of biological role, catalyzes the attachment of alanine to tRNA(Ala) in a two-step reaction: alanine is first activated by ATP to form Ala-AMP and then transferred to the acceptor end of tRNA(Ala). Also edits incorrectly charged Ser-tRNA(Ala) and Gly-tRNA(Ala) via its editing domain. This chain is Alanine--tRNA ligase, found in Exiguobacterium sibiricum (strain DSM 17290 / CCUG 55495 / CIP 109462 / JCM 13490 / 255-15).